The chain runs to 835 residues: Bifunctional uridylyltransferase/uridylyl-removing enzyme (835 aa).

The segment at 1–316 (MTDEAEDSGP…GGKPVAERSP (316 aa)) is uridylyltransferase. The segment at 317–650 (LAEGVVEQDG…SADGPEPLGV (334 aa)) is uridylyl-removing. Residues 431–554 (VDRHLIETAV…DALATGPAAW (124 aa)) enclose the HD domain. A disordered region spans residues 610-645 (QTEPPADSAPAPSSPSSPSFPSPLSSPSSPSSADGP). Pro residues predominate over residues 621–630 (PSSPSSPSFP). Low complexity predominate over residues 631–642 (SPLSSPSSPSSA). ACT domains lie at 651 to 736 (ELLI…LAER) and 765 to 835 (VIEV…SLRT).

The protein belongs to the GlnD family. Mg(2+) serves as cofactor.

The enzyme catalyses [protein-PII]-L-tyrosine + UTP = [protein-PII]-uridylyl-L-tyrosine + diphosphate. It carries out the reaction [protein-PII]-uridylyl-L-tyrosine + H2O = [protein-PII]-L-tyrosine + UMP + H(+). Uridylyltransferase (UTase) activity is inhibited by glutamine, while glutamine activates uridylyl-removing (UR) activity. Functionally, modifies, by uridylylation and deuridylylation, the PII regulatory proteins (GlnB and homologs), in response to the nitrogen status of the cell that GlnD senses through the glutamine level. Under low glutamine levels, catalyzes the conversion of the PII proteins and UTP to PII-UMP and PPi, while under higher glutamine levels, GlnD hydrolyzes PII-UMP to PII and UMP (deuridylylation). Thus, controls uridylylation state and activity of the PII proteins, and plays an important role in the regulation of nitrogen assimilation and metabolism. The chain is Bifunctional uridylyltransferase/uridylyl-removing enzyme from Streptomyces coelicolor (strain ATCC BAA-471 / A3(2) / M145).